Reading from the N-terminus, the 222-residue chain is Large ribosomal subunit protein uL1 (222 aa).

The protein belongs to the universal ribosomal protein uL1 family. Part of the 50S ribosomal subunit.

Binds directly to 23S rRNA. Probably involved in E site tRNA release. Its function is as follows. Protein L1 is also a translational repressor protein, it controls the translation of its operon by binding to its mRNA. The sequence is that of Large ribosomal subunit protein uL1 from Pyrobaculum calidifontis (strain DSM 21063 / JCM 11548 / VA1).